The primary structure comprises 724 residues: Protein arginine N-methyltransferase 1.6 (724 aa).

2 SAM-dependent MTase PRMT-type domains span residues 61-388 (NDQP…YNLK) and 395-721 (HERT…IVTH). Residues E183 and E192 contribute to the active site.

Belongs to the class I-like SAM-binding methyltransferase superfamily. Protein arginine N-methyltransferase family. PRMT7 subfamily.

Arginine methyltransferase that can both catalyze the formation of omega-N monomethylarginine (MMA) and symmetrical dimethylarginine (sDMA). This Arabidopsis thaliana (Mouse-ear cress) protein is Protein arginine N-methyltransferase 1.6 (PRMT16).